Reading from the N-terminus, the 88-residue chain is Probable small nuclear ribonucleoprotein F (88 aa).

The region spanning 7 to 79 (NPKPFLNNLT…VLYVRGVPED (73 aa)) is the Sm domain.

This sequence belongs to the snRNP Sm proteins family. SmF/LSm6 subfamily.

It is found in the nucleus. Probable common Sm protein, is found in U1 and U2 snRNPs and may be part of the spliceosome. The polypeptide is Probable small nuclear ribonucleoprotein F (Arabidopsis thaliana (Mouse-ear cress)).